Consider the following 334-residue polypeptide: Large ribosomal subunit protein uL3 (334 aa).

The span at 1–10 (MGMKKNRPRR) shows a compositional bias: basic residues. The segment at 1–21 (MGMKKNRPRRGSLAFSPRKRA) is disordered.

This sequence belongs to the universal ribosomal protein uL3 family. As to quaternary structure, part of the 50S ribosomal subunit. Forms a cluster with proteins L14 and L24e.

Its function is as follows. One of the primary rRNA binding proteins, it binds directly near the 3'-end of the 23S rRNA, where it nucleates assembly of the 50S subunit. The polypeptide is Large ribosomal subunit protein uL3 (Methanococcus maripaludis (strain DSM 14266 / JCM 13030 / NBRC 101832 / S2 / LL)).